The following is a 283-amino-acid chain: Phosphatidylserine decarboxylase proenzyme (283 aa).

Residues Asp88, His145, and Ser248 each act as charge relay system; for autoendoproteolytic cleavage activity in the active site. Ser248 serves as the catalytic Schiff-base intermediate with substrate; via pyruvic acid; for decarboxylase activity. Ser248 carries the pyruvic acid (Ser); by autocatalysis modification.

This sequence belongs to the phosphatidylserine decarboxylase family. PSD-B subfamily. Prokaryotic type I sub-subfamily. In terms of assembly, heterodimer of a large membrane-associated beta subunit and a small pyruvoyl-containing alpha subunit. Requires pyruvate as cofactor. Post-translationally, is synthesized initially as an inactive proenzyme. Formation of the active enzyme involves a self-maturation process in which the active site pyruvoyl group is generated from an internal serine residue via an autocatalytic post-translational modification. Two non-identical subunits are generated from the proenzyme in this reaction, and the pyruvate is formed at the N-terminus of the alpha chain, which is derived from the carboxyl end of the proenzyme. The autoendoproteolytic cleavage occurs by a canonical serine protease mechanism, in which the side chain hydroxyl group of the serine supplies its oxygen atom to form the C-terminus of the beta chain, while the remainder of the serine residue undergoes an oxidative deamination to produce ammonia and the pyruvoyl prosthetic group on the alpha chain. During this reaction, the Ser that is part of the protease active site of the proenzyme becomes the pyruvoyl prosthetic group, which constitutes an essential element of the active site of the mature decarboxylase.

Its subcellular location is the cell membrane. The catalysed reaction is a 1,2-diacyl-sn-glycero-3-phospho-L-serine + H(+) = a 1,2-diacyl-sn-glycero-3-phosphoethanolamine + CO2. It participates in phospholipid metabolism; phosphatidylethanolamine biosynthesis; phosphatidylethanolamine from CDP-diacylglycerol: step 2/2. In terms of biological role, catalyzes the formation of phosphatidylethanolamine (PtdEtn) from phosphatidylserine (PtdSer). In Acidovorax ebreus (strain TPSY) (Diaphorobacter sp. (strain TPSY)), this protein is Phosphatidylserine decarboxylase proenzyme.